The sequence spans 386 residues: Antilisterial bacteriocin subtilosin biosynthesis protein AlbE (386 aa).

Functionally, involved in the production of the bacteriocin subtilosin. This Bacillus subtilis protein is Antilisterial bacteriocin subtilosin biosynthesis protein AlbE (albE).